The sequence spans 904 residues: Toll-like receptor 3 (904 aa).

The first 23 residues, 1 to 23 (MRQTLPCIYFWGGLLPFGMLCAS), serve as a signal peptide directing secretion. Positions 24-51 (STTKCTVSHEVADCSHLKLTQVPDDLPT) constitute an LRRNT domain. The Lumenal portion of the chain corresponds to 24 to 704 (STTKCTVSHE…SCKDSAPFEL (681 aa)). Cysteine 28 and cysteine 37 are joined by a disulfide. Residues asparagine 52, asparagine 57, and asparagine 70 are each glycosylated (N-linked (GlcNAc...) asparagine). LRR repeat units follow at residues 52-73 (NITV…NFTR), 76-97 (QLTS…LCQK), 100-121 (MLKV…TFAF), 124-145 (NLTE…PFVK), 148-168 (NLIT…GTQV), and 172-193 (NLQE…ELDI). A disulfide bond links cysteine 95 and cysteine 122. Asparagine 124 carries N-linked (GlcNAc...) asparagine glycosylation. The N-linked (GlcNAc...) asparagine glycan is linked to asparagine 196. LRR repeat units lie at residues 198–219 (SLKK…CFHA) and 222–244 (RLFG…LCLE). Asparagine 247, asparagine 252, asparagine 265, asparagine 275, and asparagine 291 each carry an N-linked (GlcNAc...) asparagine glycan. LRR repeat units follow at residues 249–270 (SIRN…TFLG), 275–296 (NLTM…SFAW), 299–320 (QLEY…SLHG), 323–344 (NVRY…ASLP), 356–377 (CLEH…MFTG), 380–400 (NLKY…TNET), 408–429 (PLHI…AFSW), 432–454 (HLEV…EWRG), 465–486 (YNKY…QRLM), 507–528 (NLTI…MLEG), 531–552 (KLEI…ANPG), 563–584 (HLHI…VFKD), 587–608 (ELKI…VFNN), and 611–632 (SLKS…VFGP). 2 N-linked (GlcNAc...) asparagine glycosylation sites follow: asparagine 398 and asparagine 413. Asparagine 507 carries N-linked (GlcNAc...) asparagine glycosylation. Asparagine 636 and asparagine 662 each carry an N-linked (GlcNAc...) asparagine glycan. Residues 645 to 698 (NPFDCTCESIAWFVNWINETHTNIPELSSHYLCNTPPHYHGFPVRLFDTSSCKD) enclose the LRRCT domain. 2 disulfide bridges follow: cysteine 649–cysteine 677 and cysteine 651–cysteine 696. Residues 705 to 725 (FFMINTSILLIFIFIVLLIHF) traverse the membrane as a helical segment. The Cytoplasmic segment spans residues 726 to 904 (EGWRISFYWN…VALGSKNSVH (179 aa)). One can recognise a TIR domain in the interval 754–897 (FEYAAYIIHA…AFRHKLQVAL (144 aa)). Position 759 is a phosphotyrosine (tyrosine 759). Glycyl lysine isopeptide (Lys-Gly) (interchain with G-Cter in ubiquitin) cross-links involve residues lysine 765, lysine 812, and lysine 831. Phosphotyrosine is present on tyrosine 858.

The protein belongs to the Toll-like receptor family. As to quaternary structure, monomer and homodimer; dimerization is triggered by ligand-binding, the signaling unit is composed of one ds-RNA of around 40 bp and two TLR3 molecules, and lateral clustering of signaling units along the length of the ds-RNA ligand is required for TLR3 signal transduction. Interacts (via transmembrane domain) with UNC93B1; the interaction is required for transport from the ER to the endosomes. Interacts with SRC; upon binding of double-stranded RNA. Interacts with TICAM1 (via the TIR domain) in response to poly(I:C) and this interaction is enhanced in the presence of WDFY1. The tyrosine-phosphorylated form (via TIR domain) interacts with WDFY1 (via WD repeat 2) in response to poly(I:C). Post-translationally, heavily N-glycosylated, except on that part of the surface of the ectodomain that is involved in ligand binding. In terms of processing, TLR3 signaling requires a proteolytic cleavage mediated by cathepsins CTSB and CTSH, the cleavage occurs between amino acids 252 and 346. The cleaved form of TLR3 is the predominant form found in endosomes. Ubiquitinated by TRIM3; leading to recognition and sorting of polyubiquitinated TLR3 by the ESCRT complexes. Ubiquitinated by ZNRF1 via 'Lys-63'-linked ubiquitin chains; leading to TLR3 lysosomal trafficking and degradation. Ubiquitinated by RNF170 at Lys-765 via 'Lys-48'-linked ubiquitin chains; leading to TLR3 proteasomal degradation. In terms of tissue distribution, expressed at high level in placenta and pancreas. Also detected in CD11c+ immature dendritic cells. Only expressed in dendritic cells and not in other leukocytes, including monocyte precursors. TLR3 is the TLR that is expressed most strongly in the brain, especially in astrocytes, glia, and neurons.

Its subcellular location is the endoplasmic reticulum membrane. It localises to the endosome membrane. It is found in the early endosome. Its function is as follows. Key component of innate and adaptive immunity. TLRs (Toll-like receptors) control host immune response against pathogens through recognition of molecular patterns specific to microorganisms. TLR3 is a nucleotide-sensing TLR which is activated by double-stranded RNA, a sign of viral infection. Acts via the adapter TRIF/TICAM1, leading to NF-kappa-B activation, IRF3 nuclear translocation, cytokine secretion and the inflammatory response. This chain is Toll-like receptor 3, found in Homo sapiens (Human).